Here is a 67-residue protein sequence, read N- to C-terminus: MKLRVRQKASNIGQVEHTRKIIKGLGLRGPGSEVVVANTPSFRGMVKKVLHLVEVEEVADGATSSKA.

The protein belongs to the universal ribosomal protein uL30 family. In terms of assembly, part of the 50S ribosomal subunit.

This is Large ribosomal subunit protein uL30 from Sorangium cellulosum (strain So ce56) (Polyangium cellulosum (strain So ce56)).